A 62-amino-acid polypeptide reads, in one-letter code: Photosystem II reaction center protein Z (62 aa).

2 helical membrane-spanning segments follow: residues 8-28 (AVFA…LVFA) and 41-61 (FSGT…NSLI).

The protein belongs to the PsbZ family. In terms of assembly, PSII is composed of 1 copy each of membrane proteins PsbA, PsbB, PsbC, PsbD, PsbE, PsbF, PsbH, PsbI, PsbJ, PsbK, PsbL, PsbM, PsbT, PsbY, PsbZ, Psb30/Ycf12, at least 3 peripheral proteins of the oxygen-evolving complex and a large number of cofactors. It forms dimeric complexes.

The protein localises to the plastid. It is found in the chloroplast thylakoid membrane. In terms of biological role, may control the interaction of photosystem II (PSII) cores with the light-harvesting antenna, regulates electron flow through the 2 photosystem reaction centers. PSII is a light-driven water plastoquinone oxidoreductase, using light energy to abstract electrons from H(2)O, generating a proton gradient subsequently used for ATP formation. This is Photosystem II reaction center protein Z from Oryza nivara (Indian wild rice).